The chain runs to 509 residues: ATP synthase subunit alpha (509 aa).

ATP is bound at residue 169–176; it reads GDRQTGKT.

It belongs to the ATPase alpha/beta chains family. F-type ATPases have 2 components, CF(1) - the catalytic core - and CF(0) - the membrane proton channel. CF(1) has five subunits: alpha(3), beta(3), gamma(1), delta(1), epsilon(1). CF(0) has three main subunits: a(1), b(2) and c(9-12). The alpha and beta chains form an alternating ring which encloses part of the gamma chain. CF(1) is attached to CF(0) by a central stalk formed by the gamma and epsilon chains, while a peripheral stalk is formed by the delta and b chains.

It is found in the cell inner membrane. The catalysed reaction is ATP + H2O + 4 H(+)(in) = ADP + phosphate + 5 H(+)(out). Produces ATP from ADP in the presence of a proton gradient across the membrane. The alpha chain is a regulatory subunit. This is ATP synthase subunit alpha from Agrobacterium fabrum (strain C58 / ATCC 33970) (Agrobacterium tumefaciens (strain C58)).